The following is a 361-amino-acid chain: MKKNLMLIFGGVSFEHEISCKSAYSIYLALLDLNKYNIYPVYIDKCTGVWYLLDSVSDPPKPINTDVLPIVSLLPGFGIFSNNKNLEIDVVFPVVHGRTGEDGAIQGVLKVMDIPCVGAGIIGSAISSNKYFCKLLLKSFDIPLVPFIGFRQHDYFLDKEEIKKNVKEVLGYPVIVKPAVLGSSIGINVAYSENQIESFIKEALKYDLTIVIEKFIEAREIECSIIGNEKMKIFSPGEVVVQDFIFYDYDAKYSVIPGNSIIFNIPAHLETNQLLSIKEYAFLAYKNLELRGMARVDFFVEKKSGTIYLNEINTIPGFTDISMFAKMCSNDGLQFKDLVDNLIDYAFQSYINRKKRIDFEN.

Residues 134-344 form the ATP-grasp domain; it reads KLLLKSFDIP…FKDLVDNLID (211 aa). 167 to 222 provides a ligand contact to ATP; sequence KEVLGYPVIVKPAVLGSSIGINVAYSENQIESFIKEALKYDLTIVIEKFIEAREIE. Mg(2+) contacts are provided by Asp297, Glu311, and Asn313.

It belongs to the D-alanine--D-alanine ligase family. It depends on Mg(2+) as a cofactor. Mn(2+) is required as a cofactor.

The protein resides in the cytoplasm. It carries out the reaction 2 D-alanine + ATP = D-alanyl-D-alanine + ADP + phosphate + H(+). Its pathway is cell wall biogenesis; peptidoglycan biosynthesis. In terms of biological role, cell wall formation. In Borreliella burgdorferi (strain ZS7) (Borrelia burgdorferi), this protein is D-alanine--D-alanine ligase.